A 622-amino-acid chain; its full sequence is SLAIN motif-containing protein-like (622 aa).

Residues 34 to 60 are a coiled coil; sequence DLKEVQKLHELVKRLEIQNQQLKIKRN. Disordered regions lie at residues 404–441 and 473–622; these read HRYS…IQNH and VRSS…DGCY. Residues 405–415 show a composition bias toward low complexity; sequence RYSPSPLSSPR. Polar residues-rich tracts occupy residues 416 to 430, 484 to 502, 525 to 591, and 599 to 611; these read CQSP…TTSR, QGPS…STPP, VSTS…STVP, and SRRS…MNST.

It belongs to the SLAIN motif-containing family.

This is SLAIN motif-containing protein-like from Xenopus tropicalis (Western clawed frog).